A 119-amino-acid chain; its full sequence is Large ribosomal subunit protein bL19 (119 aa).

This sequence belongs to the bacterial ribosomal protein bL19 family.

In terms of biological role, this protein is located at the 30S-50S ribosomal subunit interface and may play a role in the structure and function of the aminoacyl-tRNA binding site. In Borreliella afzelii (strain PKo) (Borrelia afzelii), this protein is Large ribosomal subunit protein bL19.